The sequence spans 327 residues: MALSNSNSTTATVTLPDTLRFWPWQRHINPHYSACKKASSEWCESFKAFSPQAQRAFNKCDFNGCRIGCDLMNLFFIIDEHTDIASAETARTQANIIMEAIRDPEMPRSENEWVGGKAAQQFWLNATKSATPSAHRRFIDAFQMYMDAVVQQAADRSKNYVRDIDDYFVVRRDTIGAKPSFAICELYLNLPDSVMEHPVIMKLTELCIDVIIIGNDLCSYKVEHEHGDDGHNLITVVMNQFKITPQEAMNYISDLHDKLAVQFLDEWKNIPTFGGPLDLEVRTYCHGLGNWVRANDSWSFESERYFGKRGIEIQTTRQIEMNIQSHL.

Residues Asp-79, Asn-215, Ser-219, and Glu-223 each contribute to the Mg(2+) site. The short motif at 79-83 is the DDXXD motif element; the sequence is DEHTD. Residues Arg-304 and Tyr-305 each contribute to the (2E,6E)-farnesyl diphosphate site.

This sequence belongs to the terpene synthase family. Mg(2+) is required as a cofactor.

It carries out the reaction (2E,6E)-farnesyl diphosphate = Delta(6)-protoilludene + diphosphate. Its function is as follows. Terpene cyclase that catalyzes the cyclization of farnesyl diphosphate (FPP) to delta(6)-protoilludene. This Hypholoma sublateritium (strain FD-334 SS-4) protein is Delta(6)-protoilludene synthase HYPSUDRAFT_138665.